Here is an 81-residue protein sequence, read N- to C-terminus: RNA-binding protein Hfq (81 aa).

One can recognise a Sm domain in the interval Asp10 to Val69.

Belongs to the Hfq family. Homohexamer.

In terms of biological role, RNA chaperone that binds small regulatory RNA (sRNAs) and mRNAs to facilitate mRNA translational regulation in response to envelope stress, environmental stress and changes in metabolite concentrations. Also binds with high specificity to tRNAs. In Methylobacillus flagellatus (strain ATCC 51484 / DSM 6875 / VKM B-1610 / KT), this protein is RNA-binding protein Hfq.